A 439-amino-acid chain; its full sequence is F-box/FBD/LRR-repeat protein At5g56570 (439 aa).

Residues 35-81 (PTELSDMPDDLIFKIFSFLPFFKEDLATRFISEYGKGLWNPDPNAIF) enclose the F-box domain. 2 LRR repeats span residues 155–177 (CTTL…WFRL) and 223–246 (VPTL…SFWI). Residues 361–411 (VWEKPTVVPECLSTRLEILKWRDYEGTEHEKDMVGYILANATFLQRATFST) form the FBD domain.

The sequence is that of F-box/FBD/LRR-repeat protein At5g56570 from Arabidopsis thaliana (Mouse-ear cress).